The chain runs to 1076 residues: GPI inositol-deacylase A (1076 aa).

The helical transmembrane segment at 3-23 (IATFPALAITALALVLWATVA) threads the bilayer. Residues N48 and N119 are each glycosylated (N-linked (GlcNAc...) asparagine). Residue S240 is part of the active site. Residue N404 is glycosylated (N-linked (GlcNAc...) asparagine). Transmembrane regions (helical) follow at residues 765-785 (FLGFYRVMFAIFPMFVFLCLL) and 815-835 (WILAGSCAIPFVPHVLVSLLY). The N-linked (GlcNAc...) asparagine glycan is linked to N849. The next 3 membrane-spanning stretches (helical) occupy residues 855-875 (FLGPVSLVIATGIVVVLHWLL), 877-897 (ILTLWVCQCYYMLGLAPIAPE), and 910-930 (FLLLLVFKIVPHQFAFMVAVL). Residues N952 and N966 are each glycosylated (N-linked (GlcNAc...) asparagine). 3 helical membrane passes run 970 to 990 (SLLLLLVLLLPINAPTLVVWL), 1006 to 1026 (EVSAILPILLLVLTASRGIMI), and 1035 to 1055 (IYATFAFLAYFALFVLFHGVV).

This sequence belongs to the GPI inositol-deacylase family.

Its subcellular location is the endoplasmic reticulum membrane. Its function is as follows. Involved in inositol deacylation of GPI-anchored proteins which plays important roles in the quality control and ER-associated degradation of GPI-anchored proteins. The sequence is that of GPI inositol-deacylase A (BST1A) from Yarrowia lipolytica (strain CLIB 122 / E 150) (Yeast).